The following is an 86-amino-acid chain: MSFFSFFVGEKKKSASVAKERLQIILAHERSGRNAAEPDYLPALQRELMAVISKYVKINLEDIKVNVERQDDLEVLEVKIELPDSR.

This sequence belongs to the MinE family.

Its function is as follows. Prevents the cell division inhibition by proteins MinC and MinD at internal division sites while permitting inhibition at polar sites. This ensures cell division at the proper site by restricting the formation of a division septum at the midpoint of the long axis of the cell. This is Cell division topological specificity factor from Albidiferax ferrireducens (strain ATCC BAA-621 / DSM 15236 / T118) (Rhodoferax ferrireducens).